We begin with the raw amino-acid sequence, 876 residues long: MPSAESMTPSSALGQLKATGQHVLSKLQQQTSNADIIDIRRVAVEINLKTEITSMFRPKDGPRQLPTLLLYNERGLQLFERITYLEEYYLTNDEIKILTKHATEMASFIPSGAMIIELGSGNLRKVNLLLEALDNAGKAIDYYALDLSREELERTLAQVPSYKHVKCHGLLGTYDDGRDWLKAPENINKQKCILHLGSSIGNFNRSDAATFLKGFTDVLGPNDKMLIGVDACNDPARVYHAYNDKVGITHEFILNGLRNANEIIGETAFIEGDWRVIGEYVYDEEGGRHQAFYAPTRDTMVMGELIRSHDRIQIEQSLKYSKEESERLWSTAGLEQVSEWTYGNEYGLHLLAKSRMSFSLIPSVYARSALPTLDDWEALWATWDVVTRQMLPQEELLEKPIKLRNACIFYLGHIPTFLDIQLTKTTKQAPSEPAHFCKIFERGIDPDVDNPELCHAHSEIPDEWPPVEEILTYQETVRSRLRGLYAHGIANIPRNVGRAIWVGFEHELMHIETLLYMMLQSDKTLIPTHIPRPDFDKLARKAESERVPNQWFKIPAQEITIGLDDPEDGSDINKHYGWDNEKPPRRVQVAAFQAQGRPITNEEYAQYLLEKNIDKLPASWARLDNENISNGTTNSVSGHHSNRTSKQQLPSSFLEKTAVRTVYGLVPLKHALDWPVFASYDELAGCAAYMGGRIPTFEETRSIYAYADALKKKKEAERQLGRTVPAVNAHLTNNGVEITPPSSPSSETPAESSSPSDSNTTLITTEDLFSDLDGANVGFHNWHPMPITSKGNTLVGQGELGGVWEWTSSVLRKWEGFEPMELYPGYTADFFDEKHNIVLGGSWATHPRIAGRKSFVNWYQRNYPYAWVGARVVRDL.

The L-histidine N(alpha)-methyltransferase stretch occupies residues 36–350 (IIDIRRVAVE…TYGNEYGLHL (315 aa)). Tyr-88 contributes to the L-histidine binding site. 3 residues coordinate S-adenosyl-L-methionine: Gly-119, Lys-125, and Asp-146. L-histidine contacts are provided by residues Asn-202, Tyr-242, and 315–317 (EQS). Residues 378–874 (ALWATWDVVT…YAWVGARVVR (497 aa)) are hercynylcysteine S-oxide synthase. Fe cation is bound by residues His-413, His-506, and His-510. Disordered regions lie at residues 631 to 650 (GTTN…QQLP) and 732 to 761 (TNNG…SNTT). Low complexity predominate over residues 744–758 (PSSETPAESSSPSDS).

This sequence in the N-terminal section; belongs to the methyltransferase superfamily. EgtD family. In the C-terminal section; belongs to the EgtB family. Fe(2+) is required as a cofactor.

The protein resides in the cytoplasm. It is found in the nucleus. The enzyme catalyses L-histidine + 3 S-adenosyl-L-methionine = hercynine + 3 S-adenosyl-L-homocysteine + 3 H(+). It catalyses the reaction hercynine + L-cysteine + O2 = S-(hercyn-2-yl)-L-cysteine S-oxide + H2O. It participates in amino-acid biosynthesis; ergothioneine biosynthesis. Functionally, catalyzes the SAM-dependent triple methylation of the alpha-amino group of histidine to form hercynine and subsequent conjugation with cysteine and oxygen to form hercynylcysteine sulfoxide, the first two steps in the biosynthesis pathway of ergothioneine. Ergothioneine is an unusual thio-histidine betaine amino acid that acts as an antioxidant against peroxide in conidia and contributes to conidial longevity. This Neurospora crassa (strain ATCC 24698 / 74-OR23-1A / CBS 708.71 / DSM 1257 / FGSC 987) protein is Ergothioneine biosynthesis protein 1.